A 308-amino-acid polypeptide reads, in one-letter code: Glutaminase (308 aa).

Residues S66, N117, E161, N168, Y192, Y244, and V262 each contribute to the substrate site.

Belongs to the glutaminase family. Homotetramer.

It carries out the reaction L-glutamine + H2O = L-glutamate + NH4(+). The protein is Glutaminase of Yersinia pestis bv. Antiqua (strain Nepal516).